A 139-amino-acid polypeptide reads, in one-letter code: Peptide methionine sulfoxide reductase MsrB (139 aa).

Residues 8–130 (EREWQRELSP…NSASLQLKTD (123 aa)) form the MsrB domain. Zn(2+)-binding residues include cysteine 47, cysteine 50, cysteine 96, and cysteine 99. The active-site Nucleophile is the cysteine 119.

The protein belongs to the MsrB Met sulfoxide reductase family. The cofactor is Zn(2+).

It catalyses the reaction L-methionyl-[protein] + [thioredoxin]-disulfide + H2O = L-methionyl-(R)-S-oxide-[protein] + [thioredoxin]-dithiol. The protein is Peptide methionine sulfoxide reductase MsrB of Acinetobacter baylyi (strain ATCC 33305 / BD413 / ADP1).